The chain runs to 189 residues: UPF0301 protein CF0373 (189 aa).

The protein belongs to the UPF0301 (AlgH) family.

The protein is UPF0301 protein CF0373 of Chlamydia felis (strain Fe/C-56) (Chlamydophila felis).